A 266-amino-acid polypeptide reads, in one-letter code: RNA polymerase II subunit A C-terminal domain phosphatase ssu-72 (266 aa).

Residues Met-1–Ser-31 are disordered. Positions Gly-9–Gly-23 are enriched in polar residues.

Belongs to the SSU72 phosphatase family. In terms of assembly, component of the cleavage and polyadenylation factor (CPF) complex.

It is found in the nucleus. The enzyme catalyses O-phospho-L-seryl-[protein] + H2O = L-seryl-[protein] + phosphate. It catalyses the reaction O-phospho-L-threonyl-[protein] + H2O = L-threonyl-[protein] + phosphate. Processively dephosphorylates Ser-5 of the heptad repeats YSPTSPS in the C-terminal domain of the largest RNA polymerase II subunit (rpb-1). Its function is as follows. Component of the cleavage and polyadenylation factor (CPF) complex, which plays a key role in polyadenylation-dependent pre-mRNA 3'-end formation and cooperates with cleavage factors including the CFIA complex and NAB4/CFIB. Ssu-72 is required for 3'-end formation of snoRNAs. This is RNA polymerase II subunit A C-terminal domain phosphatase ssu-72 (ssu-72) from Neurospora crassa (strain ATCC 24698 / 74-OR23-1A / CBS 708.71 / DSM 1257 / FGSC 987).